Consider the following 144-residue polypeptide: Snaclec trimecetin subunit beta (144 aa).

Positions 1 to 23 (MGRFIFVSFGLLVVFLSLSGTAA) are cleaved as a signal peptide. Cystine bridges form between Cys-25-Cys-36, Cys-53-Cys-142, and Cys-119-Cys-134. One can recognise a C-type lectin domain in the interval 32 to 143 (FRRYCYQVFQ…CSSKRYVVCK (112 aa)).

The protein belongs to the snaclec family. In terms of assembly, heterodimer of subunits alpha and beta; disulfide-linked. Expressed by the venom gland.

The protein localises to the secreted. Functionally, snaclec that induces platelet aggregation in either human platelet rich plasma (PRP) or washed platelet suspensions. It causes aggregation in a dose-dependent manner even in the absence of various platelet agonists such as ADP or von Willebrand factor (vWF). Interestingly, it does not induce aggregation in rabbit PRP. A monoclonal antibody against the platelet GPIb receptor blocks the aggregation induced by trimecetin, suggesting that it acts by binding to GPIb (GP1BA/GP1BB). The sequence is that of Snaclec trimecetin subunit beta from Protobothrops mucrosquamatus (Taiwan habu).